The sequence spans 263 residues: Phosphoinositide-3-kinase-interacting protein 1 (263 aa).

Positions Met1 to Cys18 are cleaved as a signal peptide. Over Leu19 to Gly163 the chain is Extracellular. The 76-residue stretch at Asp24–Cys99 folds into the Kringle domain. 3 disulfide bridges follow: Cys25-Cys99, Cys46-Cys80, and Cys69-Cys94. N-linked (GlcNAc...) asparagine glycosylation is present at Asn103. Residues Thr164–Ile184 form a helical membrane-spanning segment. The Cytoplasmic portion of the chain corresponds to Thr185–Ala263. The interval Asn239 to Ala263 is disordered.

The protein localises to the cell membrane. In terms of biological role, negative regulator of hepatic phosphatidylinositol 3-kinase (PI3K) activity. The protein is Phosphoinositide-3-kinase-interacting protein 1 (pik3ip1) of Danio rerio (Zebrafish).